A 321-amino-acid chain; its full sequence is Acetyl-coenzyme A carboxylase carboxyl transferase subunit beta, chloroplastic (321 aa).

Residues 47-321 (LWAQCDNCEN…FWFYVLRSSL (275 aa)) form the CoA carboxyltransferase N-terminal domain. Cysteine 51, cysteine 54, cysteine 70, and cysteine 73 together coordinate Zn(2+). The C4-type zinc-finger motif lies at 51–73 (CDNCENLLYLRFLRENQSVCKEC).

The protein belongs to the AccD/PCCB family. Acetyl-CoA carboxylase is a heterohexamer composed of biotin carboxyl carrier protein, biotin carboxylase and 2 subunits each of ACCase subunit alpha and ACCase plastid-coded subunit beta (accD). Zn(2+) is required as a cofactor.

It is found in the plastid. The protein localises to the chloroplast stroma. It catalyses the reaction N(6)-carboxybiotinyl-L-lysyl-[protein] + acetyl-CoA = N(6)-biotinyl-L-lysyl-[protein] + malonyl-CoA. It participates in lipid metabolism; malonyl-CoA biosynthesis; malonyl-CoA from acetyl-CoA: step 1/1. Its function is as follows. Component of the acetyl coenzyme A carboxylase (ACC) complex. Biotin carboxylase (BC) catalyzes the carboxylation of biotin on its carrier protein (BCCP) and then the CO(2) group is transferred by the transcarboxylase to acetyl-CoA to form malonyl-CoA. The sequence is that of Acetyl-coenzyme A carboxylase carboxyl transferase subunit beta, chloroplastic from Pinus thunbergii (Japanese black pine).